Here is a 61-residue protein sequence, read N- to C-terminus: Large ribosomal subunit protein bL32 (61 aa).

Residues 1 to 16 are compositionally biased toward basic residues; that stretch reads MAVPKRKTSPSKRGMR. Residues 1 to 61 form a disordered region; the sequence is MAVPKRKTSP…RQVLTPKESA (61 aa). Residues 28 to 44 are compositionally biased toward basic and acidic residues; that stretch reads VEDKNSGELRRPHHIDL.

This sequence belongs to the bacterial ribosomal protein bL32 family.

In Rhizobium etli (strain CIAT 652), this protein is Large ribosomal subunit protein bL32.